A 501-amino-acid chain; its full sequence is Flagellin (501 aa).

It belongs to the bacterial flagellin family.

The protein resides in the secreted. It localises to the bacterial flagellum. Functionally, flagellin is the subunit protein which polymerizes to form the filaments of bacterial flagella. This chain is Flagellin (flaA), found in Aquifex pyrophilus.